We begin with the raw amino-acid sequence, 431 residues long: Signal recognition particle 54 kDa protein (431 aa).

GTP contacts are provided by residues 105–112 (GVEGSGKT), 185–189 (DTAGR), and 243–246 (TKMD).

The protein belongs to the GTP-binding SRP family. SRP54 subfamily. As to quaternary structure, part of the signal recognition particle protein translocation system, which is composed of SRP and FtsY. Archaeal SRP consists of a 7S RNA molecule of 300 nucleotides and two protein subunits: SRP54 and SRP19.

The protein localises to the cytoplasm. The enzyme catalyses GTP + H2O = GDP + phosphate + H(+). Its function is as follows. Involved in targeting and insertion of nascent membrane proteins into the cytoplasmic membrane. Binds to the hydrophobic signal sequence of the ribosome-nascent chain (RNC) as it emerges from the ribosomes. The SRP-RNC complex is then targeted to the cytoplasmic membrane where it interacts with the SRP receptor FtsY. This Pyrobaculum calidifontis (strain DSM 21063 / JCM 11548 / VA1) protein is Signal recognition particle 54 kDa protein.